The primary structure comprises 592 residues: Probable 6-phosphofructo-2-kinase C222.13c (592 aa).

The disordered stretch occupies residues 1 to 80 (MSNTGSARTE…PANDVEKMEV (80 aa)). Positions 57–66 (SIFKREELTP) are enriched in basic and acidic residues. Residue 150 to 157 (GIPATGKS) coordinates ATP. Residues Asp-235 and Cys-266 contribute to the active site. Arg-300 is a beta-D-fructose 6-phosphate binding site. His-527 serves as the catalytic Proton donor.

Its subcellular location is the cytoplasm. It localises to the nucleus. It catalyses the reaction beta-D-fructose 6-phosphate + ATP = beta-D-fructose 2,6-bisphosphate + ADP + H(+). Its function is as follows. Synthesis of fructose 2,6-bisphosphate. This Schizosaccharomyces pombe (strain 972 / ATCC 24843) (Fission yeast) protein is Probable 6-phosphofructo-2-kinase C222.13c.